The chain runs to 473 residues: Photosystem II CP43 reaction center protein (473 aa).

The propeptide occupies 1-14 (MKILYSLRRFYHVE). Thr15 carries the post-translational modification N-acetylthreonine. Position 15 is a phosphothreonine (Thr15). Helical transmembrane passes span 69 to 93 (LFEV…PHLA), 134 to 155 (LLGP…QDRN), 178 to 200 (KALY…RKIT), 255 to 275 (KPFA…LSYS), and 291 to 312 (WFNN…ASQA). Glu367 serves as a coordination point for [CaMn4O5] cluster. The helical transmembrane segment at 447–471 (RARAAAAGFEKGIDRDLEPVVYMTP) threads the bilayer.

Belongs to the PsbB/PsbC family. PsbC subfamily. PSII is composed of 1 copy each of membrane proteins PsbA, PsbB, PsbC, PsbD, PsbE, PsbF, PsbH, PsbI, PsbJ, PsbK, PsbL, PsbM, PsbT, PsbX, PsbY, PsbZ, Psb30/Ycf12, at least 3 peripheral proteins of the oxygen-evolving complex and a large number of cofactors. It forms dimeric complexes. It depends on Binds multiple chlorophylls and provides some of the ligands for the Ca-4Mn-5O cluster of the oxygen-evolving complex. It may also provide a ligand for a Cl- that is required for oxygen evolution. PSII binds additional chlorophylls, carotenoids and specific lipids. as a cofactor. Post-translationally, phosphorylated in both bundle sheath and mesophyll cells, phosphorylation increases when cells are grown under high rather than low light regimes (70 vs 900 umol photons/m-2/s).

The protein localises to the plastid. It is found in the chloroplast thylakoid membrane. In terms of biological role, one of the components of the core complex of photosystem II (PSII). It binds chlorophyll and helps catalyze the primary light-induced photochemical processes of PSII. PSII is a light-driven water:plastoquinone oxidoreductase, using light energy to abstract electrons from H(2)O, generating O(2) and a proton gradient subsequently used for ATP formation. The polypeptide is Photosystem II CP43 reaction center protein (Zea mays (Maize)).